Consider the following 79-residue polypeptide: Small ribosomal subunit protein bS18B (79 aa).

It belongs to the bacterial ribosomal protein bS18 family. In terms of assembly, part of the 30S ribosomal subunit. Forms a tight heterodimer with protein bS6.

Binds as a heterodimer with protein bS6 to the central domain of the 16S rRNA, where it helps stabilize the platform of the 30S subunit. The protein is Small ribosomal subunit protein bS18B of Mycolicibacterium gilvum (strain PYR-GCK) (Mycobacterium gilvum (strain PYR-GCK)).